An 833-amino-acid chain; its full sequence is Putative GPI inositol-deacylase C (833 aa).

The active site involves Ser-130. Residues Asn-191 and Asn-456 are each glycosylated (N-linked (GlcNAc...) asparagine). 5 consecutive transmembrane segments (helical) span residues 521–541 (ILFISLPSAILYAIFLVQFHA), 560–580 (YLLTSCLAGSGIAYLTGLSQV), 617–637 (VLAPIFTVFSTGMVVLITELV), 672–692 (TVFVAVISVLVLLFFPYQLAF), and 723–743 (TICVLMTWTCIINAPVLAVWI). The N-linked (GlcNAc...) asparagine glycan is linked to Asn-772. The helical transmembrane segment at 787-807 (LLLAYTSLHCLFYGMMQAFMI) threads the bilayer.

This sequence belongs to the GPI inositol-deacylase family.

Its subcellular location is the endoplasmic reticulum membrane. In terms of biological role, involved in inositol deacylation of GPI-anchored proteins which plays important roles in the quality control and ER-associated degradation of GPI-anchored proteins. This Yarrowia lipolytica (strain CLIB 122 / E 150) (Yeast) protein is Putative GPI inositol-deacylase C (BST1C).